A 169-amino-acid chain; its full sequence is Disulfide bond formation protein B (169 aa).

At 1 to 8 (MRLSVRWV) the chain is on the cytoplasmic side. A helical membrane pass occupies residues 9-25 (FFLGFFLCALMLAIAGY). The Periplasmic portion of the chain corresponds to 26–43 (FQFVENLEPCPLCILSRV). Cys35 and Cys38 are oxidised to a cystine. The helical transmembrane segment at 44 to 60 (AVLAIGGVFLVAALHNP) threads the bilayer. Over 61 to 67 (KSWGIKV) the chain is Cytoplasmic. The helical transmembrane segment at 68 to 84 (YALLGFVVTLIGIGITG) threads the bilayer. At 85-141 (RHVWLQSLPADQVPACGPGLNFMLDNFPLTETLELVFRGSGECAEVQWSFLGLTIPG) the chain is on the periplasmic side. Cysteines 100 and 127 form a disulfide. The chain crosses the membrane as a helical span at residues 142-160 (WTLVAFLFLGVISLWQMGR). Residues 161–169 (TGGGAGKLT) are Cytoplasmic-facing.

This sequence belongs to the DsbB family.

It is found in the cell inner membrane. Its function is as follows. Required for disulfide bond formation in some periplasmic proteins. Acts by oxidizing the DsbA protein. The chain is Disulfide bond formation protein B from Nitrosococcus oceani (strain ATCC 19707 / BCRC 17464 / JCM 30415 / NCIMB 11848 / C-107).